A 127-amino-acid chain; its full sequence is uncharacterized protein (127 aa).

This is an uncharacterized protein from Pasteurella multocida (strain Pm70).